The following is a 677-amino-acid chain: Galactocerebrosidase (677 aa).

An N-terminal signal peptide occupies residues 1 to 33 (MGTVPAGSRRAPGCGEGMFILCLALLLAPGAPA). Substrate contacts are provided by threonine 101, tryptophan 143, and asparagine 189. Catalysis depends on glutamate 190, which acts as the Proton donor/acceptor. Glutamate 265 serves as the catalytic Nucleophile. Cysteine 278 and cysteine 385 are oxidised to a cystine. Asparagine 291, asparagine 370, and asparagine 381 each carry an N-linked (GlcNAc...) asparagine glycan. Arginine 387 serves as a coordination point for substrate. N-linked (GlcNAc...) asparagine glycans are attached at residues asparagine 394, asparagine 399, asparagine 424, asparagine 441, asparagine 509, asparagine 549, and asparagine 630.

Belongs to the glycosyl hydrolase 59 family.

It localises to the lysosome. It carries out the reaction a beta-D-galactosyl-(1&lt;-&gt;1')-N-acylsphing-4-enine + H2O = an N-acylsphing-4-enine + D-galactose. It catalyses the reaction beta-D-galactosyl-(1&lt;-&gt;1)-sphing-4-enine + H2O = sphing-4-enine + D-galactose. The catalysed reaction is a D-galactosylceramide + H2O = an N-acyl-sphingoid base + D-galactose. Functionally, hydrolyzes the galactose ester bonds of glycolipids such as galactosylceramide and galactosylsphingosine. In Xenopus laevis (African clawed frog), this protein is Galactocerebrosidase.